We begin with the raw amino-acid sequence, 149 residues long: Large ribosomal subunit protein bL9 (149 aa).

This sequence belongs to the bacterial ribosomal protein bL9 family.

Its function is as follows. Binds to the 23S rRNA. This is Large ribosomal subunit protein bL9 from Legionella pneumophila (strain Paris).